We begin with the raw amino-acid sequence, 114 residues long: NADH-quinone oxidoreductase subunit K 2 (114 aa).

3 helical membrane passes run 1–21, 29–49, and 62–82; these read MIVP…LGVF, LIMI…AFIG, and FVLF…AIIV.

The protein belongs to the complex I subunit 4L family. In terms of assembly, NDH-1 is composed of 14 different subunits. Subunits NuoA, H, J, K, L, M, N constitute the membrane sector of the complex.

Its subcellular location is the cell inner membrane. The catalysed reaction is a quinone + NADH + 5 H(+)(in) = a quinol + NAD(+) + 4 H(+)(out). Its function is as follows. NDH-1 shuttles electrons from NADH, via FMN and iron-sulfur (Fe-S) centers, to quinones in the respiratory chain. The immediate electron acceptor for the enzyme in this species is believed to be ubiquinone. Couples the redox reaction to proton translocation (for every two electrons transferred, four hydrogen ions are translocated across the cytoplasmic membrane), and thus conserves the redox energy in a proton gradient. This is NADH-quinone oxidoreductase subunit K 2 from Syntrophobacter fumaroxidans (strain DSM 10017 / MPOB).